We begin with the raw amino-acid sequence, 988 residues long: DNA-binding protein SMUBP-2 (988 aa).

N-acetylalanine is present on alanine 2. Residues 213–220 (GPPGTGKT), glutamine 402, tyrosine 441, and glutamate 570 contribute to the ATP site. The segment at 637 to 783 (TAFEYLDDIV…KARHITVSRR (147 aa)) is SS DNA-binding. 3 disordered regions span residues 651 to 722 (THEG…GGTD), 765 to 820 (LKHD…PHGS), and 835 to 872 (RQQG…ALPS). Residues 702–718 (SQVQPQHSSKANGSDRT) are compositionally biased toward polar residues. Residues 721–784 (TDRTEHFRAM…ARHITVSRRS (64 aa)) form the R3H domain. Residues 765–775 (LKHDSTGEGKA) are compositionally biased toward basic and acidic residues. Serine 797 and serine 800 each carry phosphoserine. The span at 802 to 817 (AQAEPEPQVEQPVGQP) shows a compositional bias: low complexity. Residues 835-844 (RQQGCQAQSQ) are compositionally biased toward polar residues. Residues 857–861 (KKKKK) carry the Nuclear localization signal motif. The AN1-type zinc finger occupies 884 to 933 (VKADNTCSFTKCSASTTTLGQFCMHCSRRYCLSHHLPEIHGCGEKARAHA). Zn(2+)-binding residues include cysteine 890, cysteine 895, cysteine 906, cysteine 909, cysteine 914, histidine 917, histidine 923, and cysteine 925. The tract at residues 943–988 (LYAGSGTKDRALDPAKRAQLQRKLDKKLGELSSQRTSKKKEKERGT) is disordered. Over residues 949-971 (TKDRALDPAKRAQLQRKLDKKLG) the composition is skewed to basic and acidic residues. Positions 957 to 986 (AKRAQLQRKLDKKLGELSSQRTSKKKEKER) form a coiled coil.

It belongs to the DNA2/NAM7 helicase family. Homooligomer. Interacts with RUVBL1. Interacts with RUVBL2. Interacts with GTF3C1. Interacts with ABT1. Interacts with ribosomes. In terms of tissue distribution, expressed in liver, skin, muscle, heart, brain, spleen and kidney.

Its subcellular location is the nucleus. It is found in the cytoplasm. It localises to the cell projection. The protein localises to the axon. It catalyses the reaction ATP + H2O = ADP + phosphate + H(+). Functionally, 5' to 3' helicase that unwinds RNA and DNA duplexes in an ATP-dependent reaction. Specific to 5'-phosphorylated single-stranded guanine-rich sequences. May play a role in RNA metabolism, ribosome biogenesis or initiation of translation. May play a role in regulation of transcription. Interacts with tRNA-Tyr. This is DNA-binding protein SMUBP-2 (Ighmbp2) from Rattus norvegicus (Rat).